Here is a 451-residue protein sequence, read N- to C-terminus: Gamma-aminobutyric acid receptor subunit alpha-2 (451 aa).

The signal sequence occupies residues 1–28 (MKTKLSTCNVWSLLLVLLVWDPVRLVLA). Topologically, residues 29-249 (NIQEDEAKNN…MTAHFHLKRK (221 aa)) are extracellular. N38 carries an N-linked (GlcNAc...) asparagine glycan. R94 contributes to the 4-aminobutanoate binding site. N138 carries N-linked (GlcNAc...) asparagine glycosylation. Residue T157 coordinates 4-aminobutanoate. An intrachain disulfide couples C166 to C180. The helical transmembrane segment at 250–270 (IGYFVIQTYLPCIMTVILSQV) threads the bilayer. The Cytoplasmic segment spans residues 271-280 (SFWLNRESVP). The helical transmembrane segment at 281–300 (ARTVFGVTTVLTMTTLSISA) threads the bilayer. Topologically, residues 301-311 (RNSLPKVAYAT) are extracellular. The helical transmembrane segment at 312–332 (AMDWFIAVCYAFVFSALIEFA) threads the bilayer. Residues 333–420 (TVNYFTKRGW…FNSVSKIDRM (88 aa)) are Cytoplasmic-facing. The interval 389–408 (KSATTPEPNKKPENKPAEAK) is disordered. The segment covering 396–408 (PNKKPENKPAEAK) has biased composition (basic and acidic residues). A helical membrane pass occupies residues 421–441 (SRIVFPVLFGTFNLVYWATYL). Residues 442-451 (NREPVLGVSP) are Extracellular-facing.

This sequence belongs to the ligand-gated ion channel (TC 1.A.9) family. Gamma-aminobutyric acid receptor (TC 1.A.9.5) subfamily. GABRA2 sub-subfamily. Heteropentamer, formed by a combination of alpha (GABRA1-6), beta (GABRB1-3), gamma (GABRG1-3), delta (GABRD), epsilon (GABRE), rho (GABRR1-3), pi (GABRP) and theta (GABRQ) subunits, each subunit exhibiting distinct physiological and pharmacological properties. Interacts with UBQLN1. Interacts with KIF21B. Interacts with LHFPL4. Interacts with SHISA7; interaction leads to the regulation of GABA(A) receptor trafficking, channel deactivation kinetics and pharmacology. Glycosylated.

Its subcellular location is the postsynaptic cell membrane. It is found in the cell membrane. It localises to the cytoplasmic vesicle membrane. The protein resides in the cell projection. The protein localises to the dendrite. It catalyses the reaction chloride(in) = chloride(out). With respect to regulation, activated by pentobarbital. Inhibited by the antagonist bicuculline. Alpha subunit of the heteropentameric ligand-gated chloride channel gated by gamma-aminobutyric acid (GABA), a major inhibitory neurotransmitter in the brain. GABA-gated chloride channels, also named GABA(A) receptors (GABAAR), consist of five subunits arranged around a central pore and contain GABA active binding site(s) located at the alpha and beta subunit interface(s). When activated by GABA, GABAARs selectively allow the flow of chloride anions across the cell membrane down their electrochemical gradient. Chloride influx into the postsynaptic neuron following GABAAR opening decreases the neuron ability to generate a new action potential, thereby reducing nerve transmission. The alpha-2 subunit exhibits synaptogenic activity together with beta-2 and very little to no activity together with beta-3, the gamma-2 subunit being necessary but not sufficient to induce rapid synaptic contacts formation. The chain is Gamma-aminobutyric acid receptor subunit alpha-2 from Mus musculus (Mouse).